We begin with the raw amino-acid sequence, 313 residues long: MSQEFAHLSVLLAETVGGLNIKDDGIYIDGTFGRGGHSRQVLQQLGENGRLIAIDRDPQAIEAAKQFADDPRFQIVHGGFGQLADYVEELGLVGKIDGVLLDLGVSSPQLDDAERGFSFMRDGPLDMRMDNSQGQTAAQWLARAEIEDMAWVFKTYGEEKNARHIARCIAADRDKTPFLRTKDLADLIARITKSKERNKHPATRVFQAIRIYINSELDQIDQALEGAVNVLAPQGRLSVISFHSLEDRIVKRFIRRHSQGESVPHGFPVTEDQINKSRKLRAVGKAIMPSDEEIERNARARSSVLRIAERLDY.

S-adenosyl-L-methionine contacts are provided by residues 35-37, Asp55, Phe80, Asp102, and Gln109; that span reads GGH.

Belongs to the methyltransferase superfamily. RsmH family.

The protein resides in the cytoplasm. The catalysed reaction is cytidine(1402) in 16S rRNA + S-adenosyl-L-methionine = N(4)-methylcytidine(1402) in 16S rRNA + S-adenosyl-L-homocysteine + H(+). Its function is as follows. Specifically methylates the N4 position of cytidine in position 1402 (C1402) of 16S rRNA. The chain is Ribosomal RNA small subunit methyltransferase H from Shewanella baltica (strain OS223).